Consider the following 323-residue polypeptide: tRNA U34 carboxymethyltransferase (323 aa).

Residues Lys-91, Trp-105, Lys-110, Gly-130, 152-154 (DPT), 181-182 (IE), Met-196, Tyr-200, and Arg-315 each bind carboxy-S-adenosyl-L-methionine.

This sequence belongs to the class I-like SAM-binding methyltransferase superfamily. CmoB family. Homotetramer.

It carries out the reaction carboxy-S-adenosyl-L-methionine + 5-hydroxyuridine(34) in tRNA = 5-carboxymethoxyuridine(34) in tRNA + S-adenosyl-L-homocysteine + H(+). Its function is as follows. Catalyzes carboxymethyl transfer from carboxy-S-adenosyl-L-methionine (Cx-SAM) to 5-hydroxyuridine (ho5U) to form 5-carboxymethoxyuridine (cmo5U) at position 34 in tRNAs. This chain is tRNA U34 carboxymethyltransferase, found in Salmonella paratyphi A (strain ATCC 9150 / SARB42).